The sequence spans 265 residues: uncharacterized protein (265 aa).

Positions 7, 9, 94, 130, 155, and 205 each coordinate a divalent metal cation.

This sequence belongs to the metallo-dependent hydrolases superfamily. TatD-type hydrolase family. Requires a divalent metal cation as cofactor.

This is an uncharacterized protein from Escherichia coli O157:H7.